Here is a 278-residue protein sequence, read N- to C-terminus: Sulfate transport system permease protein CysT (278 aa).

Transmembrane regions (helical) follow at residues 22–42, 67–87, 102–122, 139–159, 188–208, 217–237, and 246–266; these read FTWV…FLKS, FGLS…IAWV, FIDL…ATVY, IAFT…PFVV, FWRV…AQGF, SVVI…VLIF, and AGAT…LFVI. In terms of domain architecture, ABC transmembrane type-1 spans 63 to 266; that stretch reads YEVTFGLSLA…LFSLVILFVI (204 aa).

The protein belongs to the binding-protein-dependent transport system permease family. CysTW subfamily. The complex is composed of two ATP-binding proteins (CysA), two transmembrane proteins (CysT and CysW) and a solute-binding protein (CysP).

Its subcellular location is the cell inner membrane. Its function is as follows. Part of the ABC transporter complex CysAWTP (TC 3.A.1.6.1) involved in sulfate/thiosulfate import. Probably responsible for the translocation of the substrate across the membrane. In Synechococcus elongatus (strain ATCC 33912 / PCC 7942 / FACHB-805) (Anacystis nidulans R2), this protein is Sulfate transport system permease protein CysT (cysT).